Reading from the N-terminus, the 641-residue chain is Lipase (641 aa).

The N-terminal stretch at 1–38 (MKETKHQHTFSIRKSAYGAASVMVASCIFVIGGGVAEA) is a signal peptide. Disordered regions lie at residues 41-174 (STTQ…PSVD) and 206-246 (TVSP…KPTV). Over residues 53–64 (QTSQQETHTHQT) the composition is skewed to low complexity. Positions 73 to 94 (TPEHVDDSKEATPLPEKAESPK) are enriched in basic and acidic residues. Composition is skewed to polar residues over residues 95–106 (TEVTVQPSSHTQ) and 127–139 (PEST…VESN). Basic and acidic residues predominate over residues 140-165 (KATENEMSPVEHHASNVEKREDRLET). A compositionally biased stretch (polar residues) spans 227–239 (ENTTAQNKFTSQA). The active-site Nucleophile is Ser369. Residue Gly535 participates in Ca(2+) binding. Residue Asp559 is the Charge relay system of the active site. Asp599 contacts Ca(2+). His600 (charge relay system) is an active-site residue. Residues Asp602, Asp607, and Asp610 each coordinate Ca(2+).

This sequence belongs to the AB hydrolase superfamily. Lipase family. Requires Ca(2+) as cofactor.

It localises to the secreted. The catalysed reaction is a triacylglycerol + H2O = a diacylglycerol + a fatty acid + H(+). It carries out the reaction a 1,2-diacyl-sn-glycero-3-phosphocholine + H2O = a 2-acyl-sn-glycero-3-phosphocholine + a fatty acid + H(+). Its function is as follows. Has a broad substrate specificity hydrolyzing a variety of triglycerides and phosphatidylcholines. The polypeptide is Lipase (lip) (Staphylococcus hyicus).